Reading from the N-terminus, the 299-residue chain is S-fimbrial protein subunit SfaH (299 aa).

Belongs to the fimbrial protein family.

It is found in the fimbrium. Functionally, fimbriae (also called pili), polar filaments radiating from the surface of the bacterium to a length of 0.5-1.5 micrometers and numbering 100-300 per cell, enable bacteria to colonize the epithelium of specific host organs. Its function is as follows. A minor fimbrial subunit. This protein is necessary for full expression of S-specific binding. S-fimbrial adhesins enable pathogenic E.coli causing urinary-tract infections or newborn meningitis to attach to glycoproteins terminating with alpha-sialic acid-(2-3)-beta-Gal. The sequence is that of S-fimbrial protein subunit SfaH (sfaH) from Escherichia coli O6:K15:H31 (strain 536 / UPEC).